Consider the following 303-residue polypeptide: Protein transport protein SEC13-2 (303 aa).

6 WD repeats span residues 7-46 (AHEG…NSSS), 53-95 (GHEG…GKMQ), 102-143 (VHSA…IAST), 149-202 (AHKF…ETYV), 209-251 (GHKD…KKND), and 261-300 (KFEQ…KWEE).

The protein belongs to the WD repeat SEC13 family. The COPII coat is composed of at least 5 proteins: the SEC23/24 complex, the SEC13/31 complex, and the protein SAR1. Component of the nuclear pore complex (NPC). NPC constitutes the exclusive means of nucleocytoplasmic transport. NPCs allow the passive diffusion of ions and small molecules and the active, nuclear transport receptor-mediated bidirectional transport of macromolecules such as proteins, RNAs, ribonucleoparticles (RNPs), and ribosomal subunits across the nuclear envelope. Due to its 8-fold rotational symmetry, all subunits are present with 8 copies or multiples thereof.

It localises to the cytoplasmic vesicle. The protein localises to the COPII-coated vesicle membrane. It is found in the endoplasmic reticulum membrane. Its subcellular location is the nucleus. The protein resides in the nuclear pore complex. Its function is as follows. Component of the coat protein complex II (COPII) which promotes the formation of transport vesicles from the endoplasmic reticulum (ER). The coat has two main functions, the physical deformation of the endoplasmic reticulum membrane into vesicles and the selection of cargo molecules. It also functions as a component of the nuclear pore complex (NPC). NPC components, collectively referred to as nucleoporins (NUPs), can play the role of both NPC structural components and of docking or interaction partners for transiently associated nuclear transport factors. SEC13 is required for efficient mRNA export from the nucleus to the cytoplasm and for correct nuclear pore biogenesis and distribution. This chain is Protein transport protein SEC13-2 (SEC132), found in Candida glabrata (strain ATCC 2001 / BCRC 20586 / JCM 3761 / NBRC 0622 / NRRL Y-65 / CBS 138) (Yeast).